Here is a 336-residue protein sequence, read N- to C-terminus: F-box protein At5g50450 (336 aa).

In terms of domain architecture, F-box spans 19-70 (NNHFEDLHDDLIISILRKLATSASSPSDFLTVLSTCKRLNRLGLHPLVLSKA). Zn(2+)-binding residues include histidine 263, cysteine 266, cysteine 279, cysteine 282, cysteine 288, cysteine 292, histidine 301, and cysteine 305. Residues 263–305 (HGGCGRPETRAHEFRRCSVCGKVNYCSRGCQALDWRAKHKVEC) form an MYND-type; atypical zinc finger.

The protein is F-box protein At5g50450 of Arabidopsis thaliana (Mouse-ear cress).